Reading from the N-terminus, the 246-residue chain is Probable transcriptional regulatory protein PM0980 (246 aa).

The protein belongs to the TACO1 family.

It localises to the cytoplasm. This Pasteurella multocida (strain Pm70) protein is Probable transcriptional regulatory protein PM0980.